Consider the following 842-residue polypeptide: Alanine--tRNA ligase (842 aa).

Residues His-549, His-553, Cys-650, and His-654 each contribute to the Zn(2+) site.

It belongs to the class-II aminoacyl-tRNA synthetase family. Zn(2+) serves as cofactor.

Its subcellular location is the cytoplasm. It catalyses the reaction tRNA(Ala) + L-alanine + ATP = L-alanyl-tRNA(Ala) + AMP + diphosphate. Functionally, catalyzes the attachment of alanine to tRNA(Ala) in a two-step reaction: alanine is first activated by ATP to form Ala-AMP and then transferred to the acceptor end of tRNA(Ala). Also edits incorrectly charged Ser-tRNA(Ala) and Gly-tRNA(Ala) via its editing domain. This chain is Alanine--tRNA ligase, found in Campylobacter jejuni subsp. jejuni serotype O:6 (strain 81116 / NCTC 11828).